We begin with the raw amino-acid sequence, 418 residues long: Histidine--tRNA ligase (418 aa).

This sequence belongs to the class-II aminoacyl-tRNA synthetase family.

The protein resides in the cytoplasm. The enzyme catalyses tRNA(His) + L-histidine + ATP = L-histidyl-tRNA(His) + AMP + diphosphate + H(+). In Methanococcus aeolicus (strain ATCC BAA-1280 / DSM 17508 / OCM 812 / Nankai-3), this protein is Histidine--tRNA ligase.